The sequence spans 434 residues: Histidinol dehydrogenase (434 aa).

NAD(+) is bound by residues Tyr-130, Gln-191, and Asn-214. Residues Ser-237, Gln-259, and His-262 each coordinate substrate. 2 residues coordinate Zn(2+): Gln-259 and His-262. Residues Glu-328 and His-329 each act as proton acceptor in the active site. Substrate is bound by residues His-329, Asp-362, Glu-416, and His-421. Zn(2+) is bound at residue Asp-362. His-421 provides a ligand contact to Zn(2+).

It belongs to the histidinol dehydrogenase family. The cofactor is Zn(2+).

The enzyme catalyses L-histidinol + 2 NAD(+) + H2O = L-histidine + 2 NADH + 3 H(+). The protein operates within amino-acid biosynthesis; L-histidine biosynthesis; L-histidine from 5-phospho-alpha-D-ribose 1-diphosphate: step 9/9. Functionally, catalyzes the sequential NAD-dependent oxidations of L-histidinol to L-histidinaldehyde and then to L-histidine. The polypeptide is Histidinol dehydrogenase (Rhodospirillum rubrum (strain ATCC 11170 / ATH 1.1.1 / DSM 467 / LMG 4362 / NCIMB 8255 / S1)).